A 400-amino-acid polypeptide reads, in one-letter code: MRGRRGDRMTINIQEHMAINVCPGPIRPIRQISDYFPRGPGPEGGGGGGGEAPAHLVPLALAPPAALLGATTPEDGAEVDSYDSDDATALGTLEFDLLYDRASCTLHCSILRAKGLKPMDFNGLADPYVKLHLLPGACKANKLKTKTQRNTLNPVWNEDLTYSGITDDDITHKVLRIAVCDEDKLSHNEFIGEIRVPLRRLKPSQKKHFNICLERQVPLASPSSMSAALRGISCYLKELEQAEQGQGLLEERGRILLSLSYSSRRRGLLVGILRCAHLAAMDVNGYSDPYVKTYLRPDVDKKSKHKTCVKKKTLNPEFNEEFFYEIELSTLATKTLEVTVWDYDIGKSNDFIGGVSLGPGARGEARKHWSDCLQQPDAALERWHTLTSELPPAAGALSSA.

Residues 1 to 89 are interaction with UNC13D and DYNLT1; sequence MRGRRGDRMT…DSYDSDDATA (89 aa). C2 domains follow at residues 89–211 and 251–384; these read ALGT…HFNI and ERGR…ERWH. Ca(2+) contacts are provided by D120, D126, D181, D183, D282, D288, D342, D344, and D350. The segment at 215–400 is interaction with UNC13D; it reads RQVPLASPSS…PPAAGALSSA (186 aa).

In terms of assembly, interacts (via N-terminus) with UNC13A. Interacts with cytoplasmic dynein light chain DYNLT1. Interacts with UNC13D. It depends on Ca(2+) as a cofactor. In terms of tissue distribution, predominantly expressed in brain. Also expressed in testis.

It localises to the lysosome. Its subcellular location is the cytoplasmic vesicle. The protein resides in the secretory vesicle. It is found in the synaptic vesicle membrane. The protein localises to the synapse. It localises to the synaptosome. Functionally, calcium sensor which most probably regulates fusion of vesicles with membranes. Binds calcium and phospholipids. May be involved in calcium dependent neurotransmitter release through the interaction with UNC13A. May be involved in calcium-dependent spontaneous release of neurotransmitter in absence of action potentials in neuronal cells. Regulates Ca(2+)-dependent secretory lysosome exocytosis in mast cells. This is Double C2-like domain-containing protein alpha (DOC2A) from Homo sapiens (Human).